Consider the following 548-residue polypeptide: Chaperonin GroEL (548 aa).

ATP contacts are provided by residues 30–33 (TLGP), lysine 51, 87–91 (DGTTT), glycine 415, and 479–481 (NAV).

This sequence belongs to the chaperonin (HSP60) family. Forms a cylinder of 14 subunits composed of two heptameric rings stacked back-to-back. Interacts with the co-chaperonin GroES.

It localises to the cytoplasm. It carries out the reaction ATP + H2O + a folded polypeptide = ADP + phosphate + an unfolded polypeptide.. In terms of biological role, together with its co-chaperonin GroES, plays an essential role in assisting protein folding. The GroEL-GroES system forms a nano-cage that allows encapsulation of the non-native substrate proteins and provides a physical environment optimized to promote and accelerate protein folding. The sequence is that of Chaperonin GroEL from Stenotrophomonas maltophilia (Pseudomonas maltophilia).